Here is a 669-residue protein sequence, read N- to C-terminus: Threonine--tRNA ligase (669 aa).

The TGS domain occupies 3-60; the sequence is DAQQITLIVDGEETKVTEGTTGAELFFERRDVVVARVNGVLKDLDQVLTEGADVEGVT. The interval 260–566 is catalytic; that stretch reads DHRKLGVELD…LTEHYAGAFP (307 aa). C365, H416, and H543 together coordinate Zn(2+).

The protein belongs to the class-II aminoacyl-tRNA synthetase family. Homodimer. Requires Zn(2+) as cofactor.

It is found in the cytoplasm. The enzyme catalyses tRNA(Thr) + L-threonine + ATP = L-threonyl-tRNA(Thr) + AMP + diphosphate + H(+). Functionally, catalyzes the attachment of threonine to tRNA(Thr) in a two-step reaction: L-threonine is first activated by ATP to form Thr-AMP and then transferred to the acceptor end of tRNA(Thr). Also edits incorrectly charged L-seryl-tRNA(Thr). This is Threonine--tRNA ligase from Paenarthrobacter aurescens (strain TC1).